The sequence spans 96 residues: RNA-binding protein Hfq (96 aa).

The 60-residue stretch at 9-68 folds into the Sm domain; sequence DPFLNALRRERVPVSIYLVNGIKLQGQIESFDQFVILLKNTVSQMVYKHAISTVVPSRPV. The interval 64–96 is disordered; it reads PSRPVSHHSNTGTNQAGTNYSGGNATQQDDVAE. Polar residues predominate over residues 70–96; that stretch reads HHSNTGTNQAGTNYSGGNATQQDDVAE.

Belongs to the Hfq family. In terms of assembly, homohexamer.

Its function is as follows. RNA chaperone that binds small regulatory RNA (sRNAs) and mRNAs to facilitate mRNA translational regulation in response to envelope stress, environmental stress and changes in metabolite concentrations. Also binds with high specificity to tRNAs. This Proteus mirabilis (strain HI4320) protein is RNA-binding protein Hfq.